Consider the following 303-residue polypeptide: 4-hydroxy-3-methylbut-2-enyl diphosphate reductase (303 aa).

C12 serves as a coordination point for [4Fe-4S] cluster. The (2E)-4-hydroxy-3-methylbut-2-enyl diphosphate site is built by H42 and H75. Residues H42 and H75 each contribute to the dimethylallyl diphosphate site. H42 and H75 together coordinate isopentenyl diphosphate. [4Fe-4S] cluster is bound at residue C97. Position 125 (H125) interacts with (2E)-4-hydroxy-3-methylbut-2-enyl diphosphate. H125 is a binding site for dimethylallyl diphosphate. H125 serves as a coordination point for isopentenyl diphosphate. E127 acts as the Proton donor in catalysis. S164 contributes to the (2E)-4-hydroxy-3-methylbut-2-enyl diphosphate binding site. C192 lines the [4Fe-4S] cluster pocket. (2E)-4-hydroxy-3-methylbut-2-enyl diphosphate-binding residues include S220, S221, N222, and S264. The dimethylallyl diphosphate site is built by S220, S221, N222, and S264. The isopentenyl diphosphate site is built by S220, S221, N222, and S264.

Belongs to the IspH family. It depends on [4Fe-4S] cluster as a cofactor.

It catalyses the reaction isopentenyl diphosphate + 2 oxidized [2Fe-2S]-[ferredoxin] + H2O = (2E)-4-hydroxy-3-methylbut-2-enyl diphosphate + 2 reduced [2Fe-2S]-[ferredoxin] + 2 H(+). The enzyme catalyses dimethylallyl diphosphate + 2 oxidized [2Fe-2S]-[ferredoxin] + H2O = (2E)-4-hydroxy-3-methylbut-2-enyl diphosphate + 2 reduced [2Fe-2S]-[ferredoxin] + 2 H(+). It participates in isoprenoid biosynthesis; dimethylallyl diphosphate biosynthesis; dimethylallyl diphosphate from (2E)-4-hydroxy-3-methylbutenyl diphosphate: step 1/1. It functions in the pathway isoprenoid biosynthesis; isopentenyl diphosphate biosynthesis via DXP pathway; isopentenyl diphosphate from 1-deoxy-D-xylulose 5-phosphate: step 6/6. Its function is as follows. Catalyzes the conversion of 1-hydroxy-2-methyl-2-(E)-butenyl 4-diphosphate (HMBPP) into a mixture of isopentenyl diphosphate (IPP) and dimethylallyl diphosphate (DMAPP). Acts in the terminal step of the DOXP/MEP pathway for isoprenoid precursor biosynthesis. The polypeptide is 4-hydroxy-3-methylbut-2-enyl diphosphate reductase (Neorickettsia sennetsu (strain ATCC VR-367 / Miyayama) (Ehrlichia sennetsu)).